Here is a 37-residue protein sequence, read N- to C-terminus: Large ribosomal subunit protein bL36 (37 aa).

It belongs to the bacterial ribosomal protein bL36 family.

The chain is Large ribosomal subunit protein bL36 from Rippkaea orientalis (strain PCC 8801 / RF-1) (Cyanothece sp. (strain PCC 8801)).